Here is a 144-residue protein sequence, read N- to C-terminus: 3-dehydroquinate dehydratase (144 aa).

Tyrosine 24 functions as the Proton acceptor in the catalytic mechanism. Residues asparagine 76, histidine 82, and aspartate 89 each coordinate substrate. The active-site Proton donor is histidine 102. Residues 103–104 (LS) and arginine 113 each bind substrate.

This sequence belongs to the type-II 3-dehydroquinase family. Homododecamer.

It carries out the reaction 3-dehydroquinate = 3-dehydroshikimate + H2O. It functions in the pathway metabolic intermediate biosynthesis; chorismate biosynthesis; chorismate from D-erythrose 4-phosphate and phosphoenolpyruvate: step 3/7. Catalyzes a trans-dehydration via an enolate intermediate. In Bordetella avium (strain 197N), this protein is 3-dehydroquinate dehydratase.